We begin with the raw amino-acid sequence, 156 residues long: Small ribosomal subunit protein uS7 (156 aa).

The protein belongs to the universal ribosomal protein uS7 family. In terms of assembly, part of the 30S ribosomal subunit. Contacts proteins S9 and S11.

In terms of biological role, one of the primary rRNA binding proteins, it binds directly to 16S rRNA where it nucleates assembly of the head domain of the 30S subunit. Is located at the subunit interface close to the decoding center, probably blocks exit of the E-site tRNA. In Shewanella piezotolerans (strain WP3 / JCM 13877), this protein is Small ribosomal subunit protein uS7.